The sequence spans 422 residues: Carboxypeptidase B2 (422 aa).

An N-terminal signal peptide occupies residues 1 to 21 (MKLYGLGVLVAIILYEKHGLA). The propeptide at 22 to 113 (FQSGHVLSAL…QTSNDTVSPR (92 aa)) is activation peptide. 4 N-linked (GlcNAc...) asparagine glycosylation sites follow: Asn-43, Asn-72, Asn-84, and Asn-107. One can recognise a Peptidase M14 domain in the interval 121 to 418 (QYHSLNEIYS…AAVSKIAWHV (298 aa)). Cys-177 and Cys-190 are disulfide-bonded. 2 residues coordinate Zn(2+): His-180 and Glu-183. Substrate-binding positions include 180-183 (HARE) and Arg-238. Residue Asn-240 is glycosylated (N-linked (GlcNAc...) asparagine). 2 cysteine pairs are disulfide-bonded: Cys-249-Cys-273 and Cys-264-Cys-278. Residue 255-256 (NR) participates in substrate binding. Residue His-309 participates in Zn(2+) binding. 310–311 (SY) serves as a coordination point for substrate. N-linked (GlcNAc...) asparagine glycosylation is present at Asn-322. Tyr-362 lines the substrate pocket. Residue Glu-384 is the Proton donor/acceptor of the active site.

It belongs to the peptidase M14 family. It depends on Zn(2+) as a cofactor. Plasma; synthesized in the liver.

It localises to the secreted. It carries out the reaction Release of C-terminal Arg and Lys from a polypeptide.. TAFI/CPB2 is unique among carboxypeptidases in that it spontaneously inactivates with a short half-life, a property that is crucial for its role in controlling blood clot lysis. The zymogen is stabilized by interactions with the activation peptide. Release of the activation peptide increases a dynamic flap mobility and in time this leads to conformational changes that disrupt the catalytic site and expose a cryptic thrombin-cleavage site present at Arg-323. Cleaves C-terminal arginine or lysine residues from biologically active peptides such as kinins or anaphylatoxins in the circulation thereby regulating their activities. Down-regulates fibrinolysis by removing C-terminal lysine residues from fibrin that has already been partially degraded by plasmin. The chain is Carboxypeptidase B2 (Cpb2) from Rattus norvegicus (Rat).